The sequence spans 264 residues: Thiazole synthase (264 aa).

The active-site Schiff-base intermediate with DXP is Lys-106. 1-deoxy-D-xylulose 5-phosphate-binding positions include Gly-167, 193–194 (AG), and 215–216 (NT).

The protein belongs to the ThiG family. Homotetramer. Forms heterodimers with either ThiH or ThiS.

The protein localises to the cytoplasm. The enzyme catalyses [ThiS sulfur-carrier protein]-C-terminal-Gly-aminoethanethioate + 2-iminoacetate + 1-deoxy-D-xylulose 5-phosphate = [ThiS sulfur-carrier protein]-C-terminal Gly-Gly + 2-[(2R,5Z)-2-carboxy-4-methylthiazol-5(2H)-ylidene]ethyl phosphate + 2 H2O + H(+). The protein operates within cofactor biosynthesis; thiamine diphosphate biosynthesis. Functionally, catalyzes the rearrangement of 1-deoxy-D-xylulose 5-phosphate (DXP) to produce the thiazole phosphate moiety of thiamine. Sulfur is provided by the thiocarboxylate moiety of the carrier protein ThiS. In vitro, sulfur can be provided by H(2)S. This chain is Thiazole synthase, found in Xylella fastidiosa (strain 9a5c).